A 528-amino-acid chain; its full sequence is Chaperonin GroEL, chloroplastic (528 aa).

ATP is bound by residues 29 to 32, 86 to 90, glycine 414, and aspartate 496; these read TLGP and DGTTT.

The protein belongs to the chaperonin (HSP60) family. In terms of assembly, forms a cylinder of 14 subunits composed of two heptameric rings stacked back-to-back. Interacts with the co-chaperonin GroES.

The protein localises to the plastid. It is found in the chloroplast. The catalysed reaction is ATP + H2O + a folded polypeptide = ADP + phosphate + an unfolded polypeptide.. Its function is as follows. Together with its co-chaperonin GroES, plays an essential role in assisting protein folding. The GroEL-GroES system forms a nano-cage that allows encapsulation of the non-native substrate proteins and provides a physical environment optimized to promote and accelerate protein folding. The sequence is that of Chaperonin GroEL, chloroplastic from Porphyra purpurea (Red seaweed).